The sequence spans 1108 residues: Isoleucine--tRNA ligase (1108 aa).

The short motif at 53–63 (PFANGLPHYGH) is the 'HIGH' region element. The 'KMSKS' region motif lies at 654 to 658 (KLSKR). An ATP-binding site is contributed by K657.

Belongs to the class-I aminoacyl-tRNA synthetase family. IleS type 2 subfamily. As to quaternary structure, monomer. The cofactor is Zn(2+).

It is found in the cytoplasm. The catalysed reaction is tRNA(Ile) + L-isoleucine + ATP = L-isoleucyl-tRNA(Ile) + AMP + diphosphate. In terms of biological role, catalyzes the attachment of isoleucine to tRNA(Ile). As IleRS can inadvertently accommodate and process structurally similar amino acids such as valine, to avoid such errors it has two additional distinct tRNA(Ile)-dependent editing activities. One activity is designated as 'pretransfer' editing and involves the hydrolysis of activated Val-AMP. The other activity is designated 'posttransfer' editing and involves deacylation of mischarged Val-tRNA(Ile). The chain is Isoleucine--tRNA ligase from Rickettsia bellii (strain RML369-C).